Consider the following 496-residue polypeptide: Lysine--tRNA ligase (496 aa).

Positions 409 and 416 each coordinate Mg(2+).

Belongs to the class-II aminoacyl-tRNA synthetase family. In terms of assembly, homodimer. Mg(2+) serves as cofactor.

It localises to the cytoplasm. It catalyses the reaction tRNA(Lys) + L-lysine + ATP = L-lysyl-tRNA(Lys) + AMP + diphosphate. The protein is Lysine--tRNA ligase of Streptococcus thermophilus (strain ATCC BAA-491 / LMD-9).